The chain runs to 61 residues: uncharacterized protein (61 aa).

2 helical membrane-spanning segments follow: residues 5–25 (MLYF…SLLL) and 29–49 (YILT…PWYT).

It localises to the membrane. This is an uncharacterized protein from Saccharomyces cerevisiae (strain ATCC 204508 / S288c) (Baker's yeast).